The chain runs to 272 residues: Probable protein VP2 (272 aa).

Disordered regions lie at residues 50–116 and 195–272; these read GGSR…DFAD and YSPA…SSSS. Residues 78 to 90 are compositionally biased toward pro residues; that stretch reads APDPPAGNQPPAL. Residues 94–108 show a composition bias toward gly residues; sequence GDGGNESGAGGGESG. A compositionally biased stretch (basic and acidic residues) spans 218–230; that stretch reads SKRDNKENRDRGR. The span at 231-246 shows a compositional bias: basic residues; that stretch reads AKARAKQKPKKRRRRA. Residues 249–272 are compositionally biased toward low complexity; sequence ESSSSSSSKSSFNSEEGSSASSSS.

Post-translationally, phosphorylated at C-terminal serines.

The protein is Probable protein VP2 of Homo sapiens (Human).